A 744-amino-acid polypeptide reads, in one-letter code: Polyribonucleotide nucleotidyltransferase (744 aa).

2 residues coordinate Mg(2+): Asp487 and Asp493. Residues 554 to 613 (PSTTTLKVDKDKIRDIIGPGGKVIKEICETSGAKIDISDDGTVSIYASDKDKLKVALDKV) enclose the KH domain. The S1 motif domain maps to 623–691 (GEVFNGTVMK…NKGKAKLTIK (69 aa)). The interval 691 to 744 (KNAEKDKSSANPKPKNSPKEHQEPEKRDNGKKRAWNEDNNAETTEVVTERKYFS) is disordered. A compositionally biased stretch (basic and acidic residues) spans 707–718 (SPKEHQEPEKRD). Polar residues predominate over residues 727–736 (EDNNAETTEV).

Belongs to the polyribonucleotide nucleotidyltransferase family. The cofactor is Mg(2+).

It localises to the cytoplasm. The catalysed reaction is RNA(n+1) + phosphate = RNA(n) + a ribonucleoside 5'-diphosphate. In terms of biological role, involved in mRNA degradation. Catalyzes the phosphorolysis of single-stranded polyribonucleotides processively in the 3'- to 5'-direction. This chain is Polyribonucleotide nucleotidyltransferase, found in Rickettsia bellii (strain OSU 85-389).